A 199-amino-acid chain; its full sequence is Tropomyosin-1 (199 aa).

The stretch at 1 to 199 (MDKIREKLSN…DEIAASLENL (199 aa)) forms a coiled coil. Glycyl lysine isopeptide (Lys-Gly) (interchain with G-Cter in ubiquitin) cross-links involve residues Lys-39 and Lys-59. Disordered regions lie at residues 59–81 (KLEA…ENQI) and 102–147 (LAES…TEKL). Composition is skewed to basic and acidic residues over residues 68–80 (KQTE…KENQ) and 102–114 (LAES…DSHH). Polar residues predominate over residues 115 to 126 (LQSNNDNFSKKN). Residues 136 to 147 (SDTKLKETTEKL) show a composition bias toward basic and acidic residues. Residue Lys-187 forms a Glycyl lysine isopeptide (Lys-Gly) (interchain with G-Cter in ubiquitin) linkage. Ser-195 is subject to Phosphoserine.

As to quaternary structure, homodimer.

Its subcellular location is the cytoplasm. It is found in the cytoskeleton. This Saccharomyces cerevisiae (strain ATCC 204508 / S288c) (Baker's yeast) protein is Tropomyosin-1 (TPM1).